The following is a 620-amino-acid chain: 1-deoxy-D-xylulose-5-phosphate synthase (620 aa).

Thiamine diphosphate contacts are provided by residues His80 and Gly121–Ser123. Asp152 contacts Mg(2+). Thiamine diphosphate contacts are provided by residues Gly153–Ala154, Asn181, Tyr288, and Glu370. Asn181 provides a ligand contact to Mg(2+).

This sequence belongs to the transketolase family. DXPS subfamily. In terms of assembly, homodimer. It depends on Mg(2+) as a cofactor. Requires thiamine diphosphate as cofactor.

It catalyses the reaction D-glyceraldehyde 3-phosphate + pyruvate + H(+) = 1-deoxy-D-xylulose 5-phosphate + CO2. It functions in the pathway metabolic intermediate biosynthesis; 1-deoxy-D-xylulose 5-phosphate biosynthesis; 1-deoxy-D-xylulose 5-phosphate from D-glyceraldehyde 3-phosphate and pyruvate: step 1/1. Catalyzes the acyloin condensation reaction between C atoms 2 and 3 of pyruvate and glyceraldehyde 3-phosphate to yield 1-deoxy-D-xylulose-5-phosphate (DXP). This chain is 1-deoxy-D-xylulose-5-phosphate synthase, found in Shigella sonnei (strain Ss046).